The sequence spans 427 residues: Adenylosuccinate synthetase (427 aa).

GTP-binding positions include 12–18 (GDEGKGK) and 40–42 (GHT). The active-site Proton acceptor is Asp-13. Asp-13 and Gly-40 together coordinate Mg(2+). IMP is bound by residues 13–16 (DEGK), 38–41 (NAGH), Thr-128, Arg-142, Gln-223, Thr-238, and Arg-302. His-41 (proton donor) is an active-site residue. Residue 298–304 (VTTGRAR) coordinates substrate. GTP is bound by residues Arg-304, 330 to 332 (KLD), and 412 to 414 (GVG).

The protein belongs to the adenylosuccinate synthetase family. In terms of assembly, homodimer. The cofactor is Mg(2+).

Its subcellular location is the cytoplasm. It carries out the reaction IMP + L-aspartate + GTP = N(6)-(1,2-dicarboxyethyl)-AMP + GDP + phosphate + 2 H(+). The protein operates within purine metabolism; AMP biosynthesis via de novo pathway; AMP from IMP: step 1/2. Plays an important role in the de novo pathway of purine nucleotide biosynthesis. Catalyzes the first committed step in the biosynthesis of AMP from IMP. The protein is Adenylosuccinate synthetase of Frankia casuarinae (strain DSM 45818 / CECT 9043 / HFP020203 / CcI3).